We begin with the raw amino-acid sequence, 349 residues long: Small ribosomal subunit protein uS2 (349 aa).

The disordered stretch occupies residues 302–334; sequence QNNYDPSKRGYNPKYVNHKSTFNKFNNKKPVDS.

Belongs to the universal ribosomal protein uS2 family.

The sequence is that of Small ribosomal subunit protein uS2 from Ureaplasma parvum serovar 3 (strain ATCC 27815 / 27 / NCTC 11736).